We begin with the raw amino-acid sequence, 314 residues long: DNA-directed RNA polymerase subunit alpha (314 aa).

The tract at residues 1–228 (MIEIEKPRIE…EHLNIFVGLT (228 aa)) is alpha N-terminal domain (alpha-NTD). The interval 246–314 (EKVLEMSIEE…DLGLGLRKED (69 aa)) is alpha C-terminal domain (alpha-CTD).

The protein belongs to the RNA polymerase alpha chain family. As to quaternary structure, homodimer. The RNAP catalytic core consists of 2 alpha, 1 beta, 1 beta' and 1 omega subunit. When a sigma factor is associated with the core the holoenzyme is formed, which can initiate transcription.

It carries out the reaction RNA(n) + a ribonucleoside 5'-triphosphate = RNA(n+1) + diphosphate. In terms of biological role, DNA-dependent RNA polymerase catalyzes the transcription of DNA into RNA using the four ribonucleoside triphosphates as substrates. In Staphylococcus aureus (strain Mu3 / ATCC 700698), this protein is DNA-directed RNA polymerase subunit alpha.